Here is a 212-residue protein sequence, read N- to C-terminus: ATP phosphoribosyltransferase (212 aa).

Belongs to the ATP phosphoribosyltransferase family. Short subfamily. Heteromultimer composed of HisG and HisZ subunits.

It is found in the cytoplasm. The catalysed reaction is 1-(5-phospho-beta-D-ribosyl)-ATP + diphosphate = 5-phospho-alpha-D-ribose 1-diphosphate + ATP. The protein operates within amino-acid biosynthesis; L-histidine biosynthesis; L-histidine from 5-phospho-alpha-D-ribose 1-diphosphate: step 1/9. Its function is as follows. Catalyzes the condensation of ATP and 5-phosphoribose 1-diphosphate to form N'-(5'-phosphoribosyl)-ATP (PR-ATP). Has a crucial role in the pathway because the rate of histidine biosynthesis seems to be controlled primarily by regulation of HisG enzymatic activity. The polypeptide is ATP phosphoribosyltransferase (Prochlorococcus marinus (strain MIT 9301)).